We begin with the raw amino-acid sequence, 288 residues long: Syntaxin-1A (288 aa).

Residues 1–265 (MKDRTQELRT…KYQSKARRKK (265 aa)) lie on the Cytoplasmic side of the membrane. Ser-14, Ser-64, and Ser-95 each carry phosphoserine. The stretch at 68–109 (DEKTKEELEELMSDIKKTANKVRSKLKSIEQSIEQEEGLNRS) forms a coiled coil. Ser-188 carries the post-translational modification Phosphoserine; by DAPK1. The t-SNARE coiled-coil homology domain maps to 192 to 254 (LSEIETRHSE…ERAVSDTKKA (63 aa)). Residues Lys-252, Lys-253, and Lys-256 each participate in a glycyl lysine isopeptide (Lys-Gly) (interchain with G-Cter in SUMO) cross-link. Residues 266 to 286 (IMIIICCVILGIVIASTVGGI) traverse the membrane as a helical; Anchor for type IV membrane protein segment. The Extracellular portion of the chain corresponds to 287 to 288 (FA).

It belongs to the syntaxin family. In terms of assembly, part of the SNARE core complex containing SNAP25, VAMP2 and STX1A; this complex constitutes the basic catalytic machinery of the complex neurotransmitter release apparatus. The SNARE complex interacts with CPLX1. Interacts with STXBP1. The interaction with STXBP1 promotes assembly of the SNARE complex. Interacts (via C-terminus) with KCNB1 (via C-terminus); the interaction increases in a calcium-dependent manner and induces a pore-independent enhancement of exocytosis in neuroendocrine cells, chromaffin cells, pancreatic beta cells and from the soma of dorsal root ganglia (DRG) neurons. Interacts with SYTL4. Interacts with STXBP6. Interacts with PLCL1 (via C2 domain). Interacts with OTOF. Interacts with LGI3. Interacts (via the H3 domain) with SLC6A4 (via the N-terminus); this interaction regulates SLC4A6 channel conductance in thalamocortical neurons. Interacts with SYT6 and SYT8; the interaction is Ca(2+)-dependent. Interacts with VAMP8. Interacts with SNAP23. Interacts with VAPA and SYBU. Interacts with PRRT2. Interacts with SEPT8. Interacts with STXBP5L. Interacts with synaptotagmin-1/SYT1. Interacts with SEPTIN5; in the cerebellar cortex. Interacts with SEPTIN4; in the striatum. In terms of processing, phosphorylated by CK2. Phosphorylation at Ser-188 by DAPK1 significantly decreases its interaction with STXBP1. Post-translationally, sumoylated, sumoylation is required for regulation of synaptic vesicle endocytosis. In terms of tissue distribution, highly expressed in embryonic spinal cord and ganglia and in adult cerebellum and cerebral cortex. Expressed in heart, liver, fat, skeletal muscle, kidney and brain.

The protein resides in the cytoplasmic vesicle. It localises to the secretory vesicle. The protein localises to the synaptic vesicle membrane. Its subcellular location is the synapse. It is found in the synaptosome. The protein resides in the cell membrane. It localises to the secreted. In terms of biological role, plays an essential role in hormone and neurotransmitter calcium-dependent exocytosis and endocytosis. Part of the SNARE (Soluble NSF Attachment Receptor) complex composed of SNAP25, STX1A and VAMP2 which mediates the fusion of synaptic vesicles with the presynaptic plasma membrane. STX1A and SNAP25 are localized on the plasma membrane while VAMP2 resides in synaptic vesicles. The pairing of the three SNAREs from the N-terminal SNARE motifs to the C-terminal anchors leads to the formation of the SNARE complex, which brings membranes into close proximity and results in final fusion. Participates in the calcium-dependent regulation of acrosomal exocytosis in sperm. Also plays an important role in the exocytosis of hormones such as insulin or glucagon-like peptide 1 (GLP-1). The chain is Syntaxin-1A (STX1A) from Homo sapiens (Human).